Reading from the N-terminus, the 246-residue chain is Bis(5'-nucleosyl)-tetraphosphatase PrpE [asymmetrical] (246 aa).

It belongs to the PrpE family. Ni(2+) serves as cofactor.

It carries out the reaction P(1),P(4)-bis(5'-guanosyl) tetraphosphate + H2O = GMP + GTP + 2 H(+). In terms of biological role, asymmetrically hydrolyzes Ap4p to yield AMP and ATP. In Halalkalibacterium halodurans (strain ATCC BAA-125 / DSM 18197 / FERM 7344 / JCM 9153 / C-125) (Bacillus halodurans), this protein is Bis(5'-nucleosyl)-tetraphosphatase PrpE [asymmetrical].